The primary structure comprises 250 residues: MSSDTKKPLPYQRILLKLSGEALMGEGKYGIHPPTLMGIAEEVIELAQAGVEVALVIGGGNIFRGVAGATEGMDRASADYMGMLATCINSMAMQDALEKKGLHTRVLSAIKMEQIAEPYIRRRAVRHLEKGRVVIFAAGTGNPYFTTDTAASLRAMEINAQVILKATKVDGVYSADPKKDPTARRYRSLTYMDVLKQNLNVMDSTAISLCMDNKLPIIVFDLTQRGNIRRAVLGEGDIGTLVGGSETVWA.

K17 to G20 serves as a coordination point for ATP. UMP is bound at residue G59. ATP contacts are provided by G60 and R64. UMP-binding positions include D79 and T140–T147. ATP-binding residues include T167, Y173, and D176.

The protein belongs to the UMP kinase family. In terms of assembly, homohexamer.

The protein localises to the cytoplasm. The enzyme catalyses UMP + ATP = UDP + ADP. It functions in the pathway pyrimidine metabolism; CTP biosynthesis via de novo pathway; UDP from UMP (UMPK route): step 1/1. Its activity is regulated as follows. Inhibited by UTP. In terms of biological role, catalyzes the reversible phosphorylation of UMP to UDP. The chain is Uridylate kinase from Myxococcus xanthus (strain DK1622).